We begin with the raw amino-acid sequence, 460 residues long: Endoglucanase C (460 aa).

Positions 1 to 32 are cleaved as a signal peptide; the sequence is MIKGSSLKRFKSLVMAAIFSVSIISTAIASSA. Catalysis depends on glutamate 99, which acts as the Proton donor. The active-site Nucleophile is the aspartate 155. Residues 400–460 enclose the Dockerin domain; the sequence is KPDLKGDVNN…FAQLKVKLLN (61 aa).

The protein belongs to the glycosyl hydrolase 8 (cellulase D) family. In terms of assembly, monomer. Post-translationally, there are two forms of the cellulase. The shorter form lacks probably the C-terminal reiterated domains.

It catalyses the reaction Endohydrolysis of (1-&gt;4)-beta-D-glucosidic linkages in cellulose, lichenin and cereal beta-D-glucans.. It functions in the pathway glycan metabolism; cellulose degradation. Functionally, the biological conversion of cellulose to glucose generally requires three types of hydrolytic enzymes: (1) Endoglucanases which cut internal beta-1,4-glucosidic bonds; (2) Exocellobiohydrolases that cut the disaccharide cellobiose from the non-reducing end of the cellulose polymer chain; (3) Beta-1,4-glucosidases which hydrolyze the cellobiose and other short cello-oligosaccharides to glucose. In Ruminiclostridium cellulolyticum (strain ATCC 35319 / DSM 5812 / JCM 6584 / H10) (Clostridium cellulolyticum), this protein is Endoglucanase C (celCCC).